The chain runs to 950 residues: Zinc finger CCCH domain-containing protein 3 (950 aa).

Disordered stretches follow at residues 32–106 (GNSS…HPEP), 127–182 (IKPP…TKVG), 201–220 (VVKS…RTVS), and 314–489 (SEKS…VLRK). Over residues 56–74 (RPSRRGFSSHHGPSWRKKY) the composition is skewed to basic residues. A compositionally biased stretch (polar residues) spans 76–96 (LVNQPVESSDPASDPAFQTSL). The segment covering 327–338 (PRTTLESGNKAT) has biased composition (polar residues). The span at 344–360 (KTEKPQPKVDPEVRPEK) shows a compositional bias: basic and acidic residues. Residues 370–388 (SPSKYKWKASSPSASSSSS) show a composition bias toward low complexity. Positions 402 to 412 (SQLSPVPSRPT) are enriched in polar residues. Ser-405 bears the Phosphoserine mark. Over residues 438-449 (VKSRTKIIRRRG) the composition is skewed to basic residues. The segment covering 460–470 (SPTTATTSKNH) has biased composition (polar residues). 5 C3H1-type zinc fingers span residues 662–690 (EKKR…HDPE), 694–717 (VCTR…HHVS), 718–744 (KEKM…HVYV), 745–772 (SRKA…HTLL), and 773–795 (CPDF…HRNQ). Positions 793 to 950 (RNQKRHGRRT…GKPLHIKPRL (158 aa)) are disordered. Residues 828-838 (PTTTQRSVRQM) are compositionally biased toward polar residues. Residues 839 to 849 (SSGLASGAEAP) show a composition bias toward low complexity. Phosphoserine occurs at positions 851 and 855. Residues 857–888 (RVLASTSTLSSKATAASSPSPSPSTSSPAPSL) show a composition bias toward low complexity. The span at 914 to 928 (SLHSSPSPGGQTETG) shows a compositional bias: polar residues. A phosphoserine mark is found at Ser-918, Ser-920, and Ser-934.

As to quaternary structure, interacts with SMAD1, SMAD3, SMAD4, CPSF2 and CPSF3.

The protein resides in the nucleus. In terms of biological role, required for the export of polyadenylated mRNAs from the nucleus. Enhances ACVR1B-induced SMAD-dependent transcription. Binds to single-stranded DNA but not to double-stranded DNA in vitro. Involved in RNA cleavage. The sequence is that of Zinc finger CCCH domain-containing protein 3 (Zc3h3) from Mus musculus (Mouse).